Here is a 312-residue protein sequence, read N- to C-terminus: Homoserine O-succinyltransferase (312 aa).

The active-site Acyl-thioester intermediate is the Cys142. The substrate site is built by Lys163 and Ser192. His235 acts as the Proton acceptor in catalysis. Glu237 is an active-site residue. Arg249 provides a ligand contact to substrate.

This sequence belongs to the MetA family.

The protein localises to the cytoplasm. It catalyses the reaction L-homoserine + succinyl-CoA = O-succinyl-L-homoserine + CoA. It participates in amino-acid biosynthesis; L-methionine biosynthesis via de novo pathway; O-succinyl-L-homoserine from L-homoserine: step 1/1. Functionally, transfers a succinyl group from succinyl-CoA to L-homoserine, forming succinyl-L-homoserine. The protein is Homoserine O-succinyltransferase of Shewanella halifaxensis (strain HAW-EB4).